Reading from the N-terminus, the 294-residue chain is Homoserine kinase (294 aa).

Residue 84-94 participates in ATP binding; sequence PFSRGLGSSSA.

It belongs to the GHMP kinase family. Homoserine kinase subfamily.

Its subcellular location is the cytoplasm. The catalysed reaction is L-homoserine + ATP = O-phospho-L-homoserine + ADP + H(+). It participates in amino-acid biosynthesis; L-threonine biosynthesis; L-threonine from L-aspartate: step 4/5. Catalyzes the ATP-dependent phosphorylation of L-homoserine to L-homoserine phosphate. This Campylobacter concisus (strain 13826) protein is Homoserine kinase.